Reading from the N-terminus, the 94-residue chain is MANRGGCVTVAAEEMDELRRRNIELSREVAEMKTEMIKLWQRTVVAEEAEEQLCSQLAELEVESLEQARDYHDRMLFLMDQISRLSSSSVVSSS.

Positions 8-35 form a coiled coil; it reads VTVAAEEMDELRRRNIELSREVAEMKTE.

In Arabidopsis thaliana (Mouse-ear cress), this protein is Protein RESPONSE TO LOW SULFUR 1.